Here is a 114-residue protein sequence, read N- to C-terminus: Somatostatin-1A (114 aa).

The first 24 residues, 1–24 (MLSTRIQCALALLSLALAVCSVSA), serve as a signal peptide directing secretion. The propeptide occupies 25–88 (APTDAKLRQL…KDEVRLELER (64 aa)). A disulfide bridge connects residues cysteine 103 and cysteine 114.

It belongs to the somatostatin family.

The protein localises to the secreted. In terms of biological role, somatostatin inhibits the release of somatotropin. The polypeptide is Somatostatin-1A (sst1a) (Carassius auratus (Goldfish)).